The primary structure comprises 469 residues: Adenosylhomocysteinase (469 aa).

3 residues coordinate substrate: Thr-60, Asp-135, and Glu-195. 196–198 (TTT) contacts NAD(+). Positions 225 and 229 each coordinate substrate. Residues Asn-230, 259 to 264 (GYGDVG), Glu-282, Asn-317, 338 to 340 (IGH), and Asn-383 each bind NAD(+).

It belongs to the adenosylhomocysteinase family. NAD(+) is required as a cofactor.

The protein localises to the cytoplasm. It catalyses the reaction S-adenosyl-L-homocysteine + H2O = L-homocysteine + adenosine. It participates in amino-acid biosynthesis; L-homocysteine biosynthesis; L-homocysteine from S-adenosyl-L-homocysteine: step 1/1. Its function is as follows. May play a key role in the regulation of the intracellular concentration of adenosylhomocysteine. The polypeptide is Adenosylhomocysteinase (Maricaulis maris (strain MCS10) (Caulobacter maris)).